The following is a 132-amino-acid chain: Small ribosomal subunit protein eS24 (132 aa).

Residues 90 to 100 (RLARHGLFEKK) are compositionally biased toward basic and acidic residues. A disordered region spans residues 90-132 (RLARHGLFEKKKTSRKQRKERKNRMKKVRGTKKASVGASKKKD). Basic residues predominate over residues 101–121 (KTSRKQRKERKNRMKKVRGTK).

It belongs to the eukaryotic ribosomal protein eS24 family. In terms of assembly, component of the small ribosomal subunit.

It is found in the cytoplasm. In terms of biological role, component of the small ribosomal subunit. The ribosome is a large ribonucleoprotein complex responsible for the synthesis of proteins in the cell. Required for processing of pre-rRNA and maturation of 40S ribosomal subunits. The polypeptide is Small ribosomal subunit protein eS24 (rps24) (Takifugu rubripes (Japanese pufferfish)).